Consider the following 686-residue polypeptide: X-linked interleukin-1 receptor accessory protein-like 2 (686 aa).

Residues 1–16 form the signal peptide; that stretch reads MKPPFLLALVVCSVVS. Residues 17–354 are Extracellular-facing; that stretch reads TNLKMVSKRN…LLRKKDLIYK (338 aa). The Ig-like C2-type 1 domain maps to 18 to 132; it reads NLKMVSKRNS…YCMKVSMSLT (115 aa). Cys53 and Cys116 are oxidised to a cystine. Residues Asn63, Asn120, Asn136, Asn211, and Asn328 are each glycosylated (N-linked (GlcNAc...) asparagine). 2 Ig-like C2-type domains span residues 141–232 and 239–347; these read CYNS…LKVT and PPKP…VLLR. Cystine bridges form between Cys162–Cys214 and Cys265–Cys331. A helical transmembrane segment spans residues 355–375; the sequence is IELAGGLGAIFLLLVLLVVIY. The Cytoplasmic portion of the chain corresponds to 376 to 686; that stretch reads KCYNIELMLF…KELSFTSDIW (311 aa). The TIR domain maps to 400 to 556; sequence KEYDAYLSYT…KFWKHLVYEM (157 aa). Residue Glu488 is part of the active site.

Belongs to the interleukin-1 receptor family. In terms of tissue distribution, detected at low levels in fetal and adult brain, in particular in the frontal lobe, temporal lobe and cerebellum. Detected at very low levels in skin, liver, fetal ovary and in placenta.

Its subcellular location is the membrane. The catalysed reaction is NAD(+) + H2O = ADP-D-ribose + nicotinamide + H(+). In Homo sapiens (Human), this protein is X-linked interleukin-1 receptor accessory protein-like 2 (IL1RAPL2).